The sequence spans 168 residues: mRNA stability protein IGO1 (168 aa).

Residues 1 to 13 show a composition bias toward low complexity; sequence MSNENLSPNSSNP. A disordered region spans residues 1-31; that stretch reads MSNENLSPNSSNPDLTKLNNGESGTIDTSKF. Residues 17–31 show a composition bias toward polar residues; the sequence is KLNNGESGTIDTSKF. Residues serine 32 and serine 64 each carry the phosphoserine modification. Residues 125 to 168 are disordered; it reads KEGSISSGPPSSNNGTIGGGSTSSTPVGNHSSSSSSLYTESPIR. Low complexity-rich tracts occupy residues 127 to 139 and 146 to 168; these read GSISSGPPSSNNG and TSSTPVGNHSSSSSSLYTESPIR.

Belongs to the endosulfine family. Interacts with RIM15, DHH1, PBP1, PBP4 and LSM12. Phosphorylated at Ser-64 by RIM15.

Required for TORC1 to properly control gene expression and chronological life span. Plays an essential role in initiation of the G0 program by preventing the degradation of specific nutrient-regulated mRNAs via the 5'-3' mRNA decay pathway. This chain is mRNA stability protein IGO1 (IGO1), found in Saccharomyces cerevisiae (strain ATCC 204508 / S288c) (Baker's yeast).